The following is a 73-amino-acid chain: UPF0499 protein NFIA_054990 (73 aa).

Residues 1–20 (MKSFNLLSLSLLLAIASAAA) form the signal peptide. Cystine bridges form between Cys-46/Cys-60, Cys-50/Cys-63, and Cys-56/Cys-70.

It belongs to the UPF0499 family.

It is found in the secreted. In Neosartorya fischeri (strain ATCC 1020 / DSM 3700 / CBS 544.65 / FGSC A1164 / JCM 1740 / NRRL 181 / WB 181) (Aspergillus fischerianus), this protein is UPF0499 protein NFIA_054990.